We begin with the raw amino-acid sequence, 201 residues long: Adenylyl-sulfate kinase (201 aa).

ATP is bound at residue 35–42 (GLSGSGKS). Serine 109 (phosphoserine intermediate) is an active-site residue.

The protein belongs to the APS kinase family.

It carries out the reaction adenosine 5'-phosphosulfate + ATP = 3'-phosphoadenylyl sulfate + ADP + H(+). It participates in sulfur metabolism; hydrogen sulfide biosynthesis; sulfite from sulfate: step 2/3. Its function is as follows. Catalyzes the synthesis of activated sulfate. The sequence is that of Adenylyl-sulfate kinase from Shigella flexneri.